The sequence spans 458 residues: MTSSLSVIILAAGKGTRMQSAKPKVLQTLAGKSLLGHVLDTCHQLTVDDTIIVHGFGGEQVQDHIDQQYAHLPITWVAQTEQLGTGHAVKVTLSELPKDGQSLILYGDVPLVSCQTLATLQDANTDGMSMLTLTVDNPFGLGRIKRDKDGNIEAIIEQKDANSDEQQIQEINSGIYCVDNALLHKFLPKLSNDNAQQEYYLTDIVKMAVADGITIAAIEPEHTFEIEGVNNRQQLASLERTWQGKLVADLQEAGVQFADPTRVDIRGTLSAGQDVFVDVGVVFEGDCVLGDNVYIEAGCVIKNAQIGNACHIKPYCVIDSAEVGAGVDIGPFAHLRPETILSDNSKVGNFVEIKKSTIGDGSKVNHLSYIGDATIGTGVNVGAGVITCNYDGVNKSQTIIDDNAFIGSNSSLVAPVKIGDTATVAAGSVITKNVDAHALAFGRARQTQKNDFKRPTKK.

The tract at residues 1-232 is pyrophosphorylase; the sequence is MTSSLSVIIL…TFEIEGVNNR (232 aa). UDP-N-acetyl-alpha-D-glucosamine contacts are provided by residues 10–13, Lys-24, Gln-79, 84–85, 106–108, Gly-142, Glu-157, Asn-172, and Asn-230; these read LAAG, GT, and YGD. Mg(2+) is bound at residue Asp-108. Asn-230 contacts Mg(2+). The linker stretch occupies residues 233–253; sequence QQLASLERTWQGKLVADLQEA. The N-acetyltransferase stretch occupies residues 254 to 458; that stretch reads GVQFADPTRV…KNDFKRPTKK (205 aa). Residues Arg-336 and Lys-354 each contribute to the UDP-N-acetyl-alpha-D-glucosamine site. The active-site Proton acceptor is the His-366. Tyr-369 and Asn-380 together coordinate UDP-N-acetyl-alpha-D-glucosamine. Acetyl-CoA is bound by residues Ala-383, 389–390, Ser-408, Ala-426, and Arg-443; that span reads NY.

In the N-terminal section; belongs to the N-acetylglucosamine-1-phosphate uridyltransferase family. It in the C-terminal section; belongs to the transferase hexapeptide repeat family. Homotrimer. It depends on Mg(2+) as a cofactor.

The protein resides in the cytoplasm. The enzyme catalyses alpha-D-glucosamine 1-phosphate + acetyl-CoA = N-acetyl-alpha-D-glucosamine 1-phosphate + CoA + H(+). It catalyses the reaction N-acetyl-alpha-D-glucosamine 1-phosphate + UTP + H(+) = UDP-N-acetyl-alpha-D-glucosamine + diphosphate. It participates in nucleotide-sugar biosynthesis; UDP-N-acetyl-alpha-D-glucosamine biosynthesis; N-acetyl-alpha-D-glucosamine 1-phosphate from alpha-D-glucosamine 6-phosphate (route II): step 2/2. It functions in the pathway nucleotide-sugar biosynthesis; UDP-N-acetyl-alpha-D-glucosamine biosynthesis; UDP-N-acetyl-alpha-D-glucosamine from N-acetyl-alpha-D-glucosamine 1-phosphate: step 1/1. The protein operates within bacterial outer membrane biogenesis; LPS lipid A biosynthesis. Functionally, catalyzes the last two sequential reactions in the de novo biosynthetic pathway for UDP-N-acetylglucosamine (UDP-GlcNAc). The C-terminal domain catalyzes the transfer of acetyl group from acetyl coenzyme A to glucosamine-1-phosphate (GlcN-1-P) to produce N-acetylglucosamine-1-phosphate (GlcNAc-1-P), which is converted into UDP-GlcNAc by the transfer of uridine 5-monophosphate (from uridine 5-triphosphate), a reaction catalyzed by the N-terminal domain. The polypeptide is Bifunctional protein GlmU (Psychrobacter cryohalolentis (strain ATCC BAA-1226 / DSM 17306 / VKM B-2378 / K5)).